Reading from the N-terminus, the 478-residue chain is MRKYEGSNDPYTDPETGVMYNLLGIKDQARLERVESAFAYIRSFELGRTSISGKFDLDHMKKIHKKLFGDVYEWAGKTRLVDIVKDNSKFAHYTQIESYAPQITQQLAREQHLRGLDANEFSQRAGYYMGELNALHPFREGNGRTLREFIWQLAREAGYHIDWDRVERQEMTRASIESYYGNSDLMSALIRRNLTEFTVNRRVDVSQGINERVLSHIDIDKEWPQKGFNIAIQTTQQAPYLSSYTDTSNLEEKAQNALRNEQSYVDTFKELNDHLKTIYKDPQAAALKIEQTILAGKGDKLPDILAKAPNKVGELRGSDRLIDKLKSAGKERKAALYNVPLAISTIRRLQSFYKNSYEKHMDKLTREREQLKVEVPSLSQEAVAYMKNVEVGRNNYSKIPENINKEFVQLESALNRRFGKDVIYKRNFNLSKEIASKQTYDKKLVNELQTAIKFLQQRHIQKQNNLAITRTPSKGITR.

A Fido domain is found at 55-200; it reads FDLDHMKKIH…RRNLTEFTVN (146 aa). ATP is bound by residues 85-88, 133-136, 140-147, and Ser-175; these read KDNS, NALH, and EGNGRTLR.

In terms of assembly, homodimer. Interacts with VbhA.

The enzyme catalyses L-tyrosyl-[protein] + ATP = O-(5'-adenylyl)-L-tyrosyl-[protein] + diphosphate. It carries out the reaction L-threonyl-[protein] + ATP = 3-O-(5'-adenylyl)-L-threonyl-[protein] + diphosphate. With respect to regulation, adenylyltransferase activity is inhibited by antitoxin VbhA; which acts by competing with ATP-binding at Arg-147 and prevents productive ATP-binding. Its function is as follows. Toxic component of type II toxin-antitoxin (TA) system VbhT-VbhA. Adenylyltransferase involved in virulence by mediating the addition of adenosine 5'-monophosphate (AMP) to specific residue of host GTPases. The resulting AMPylation affects GTPases, impairing actin assembly in infected cells. In Bartonella schoenbuchensis (strain DSM 13525 / NCTC 13165 / R1), this protein is Protein adenylyltransferase VbhT (vbhT).